The chain runs to 223 residues: Deoxyribose-phosphate aldolase (223 aa).

The Proton donor/acceptor role is filled by aspartate 89. Lysine 152 functions as the Schiff-base intermediate with acetaldehyde in the catalytic mechanism. The active-site Proton donor/acceptor is lysine 181.

The protein belongs to the DeoC/FbaB aldolase family. DeoC type 1 subfamily.

Its subcellular location is the cytoplasm. It catalyses the reaction 2-deoxy-D-ribose 5-phosphate = D-glyceraldehyde 3-phosphate + acetaldehyde. It participates in carbohydrate degradation; 2-deoxy-D-ribose 1-phosphate degradation; D-glyceraldehyde 3-phosphate and acetaldehyde from 2-deoxy-alpha-D-ribose 1-phosphate: step 2/2. Catalyzes a reversible aldol reaction between acetaldehyde and D-glyceraldehyde 3-phosphate to generate 2-deoxy-D-ribose 5-phosphate. The sequence is that of Deoxyribose-phosphate aldolase from Bacillus cereus (strain Q1).